The sequence spans 263 residues: N-acetylgalactosamine permease IID component (263 aa).

The 261-residue stretch at 3–263 (SEISKKDITR…SIVCSAFGIL (261 aa)) folds into the PTS EIID domain. Transmembrane regions (helical) follow at residues 61 to 81 (LEFI…LISM), 98 to 118 (LFGP…LPIM), 131 to 151 (LLGP…RVGW), 178 to 198 (TILG…INVV), 215 to 235 (FFDK…MYYF), and 243 to 263 (PVLL…FGIL).

Its subcellular location is the cell inner membrane. In terms of biological role, the phosphoenolpyruvate-dependent sugar phosphotransferase system (PTS), a major carbohydrate active -transport system, catalyzes the phosphorylation of incoming sugar substrates concomitant with their translocation across the cell membrane. This system is involved in N-acetylgalactosamine transport. In Escherichia coli (strain K12), this protein is N-acetylgalactosamine permease IID component (agaD).